The primary structure comprises 1020 residues: Valine--tRNA ligase (1020 aa).

The 'HIGH' region signature appears at 45 to 55; sequence PNVTGALHVGH. Residues 661–665 carry the 'KMSKS' region motif; that stretch reads KMSKT. K664 serves as a coordination point for ATP. The stretch at 955–1020 forms a coiled coil; that stretch reads AEKDRLEKAK…EALARLAELG (66 aa).

This sequence belongs to the class-I aminoacyl-tRNA synthetase family. ValS type 1 subfamily. In terms of assembly, monomer.

The protein resides in the cytoplasm. The catalysed reaction is tRNA(Val) + L-valine + ATP = L-valyl-tRNA(Val) + AMP + diphosphate. Functionally, catalyzes the attachment of valine to tRNA(Val). As ValRS can inadvertently accommodate and process structurally similar amino acids such as threonine, to avoid such errors, it has a 'posttransfer' editing activity that hydrolyzes mischarged Thr-tRNA(Val) in a tRNA-dependent manner. This Ruegeria pomeroyi (strain ATCC 700808 / DSM 15171 / DSS-3) (Silicibacter pomeroyi) protein is Valine--tRNA ligase.